A 442-amino-acid chain; its full sequence is Proline--tRNA ligase (442 aa).

The protein belongs to the class-II aminoacyl-tRNA synthetase family. ProS type 2 subfamily. Homodimer.

The protein localises to the cytoplasm. The catalysed reaction is tRNA(Pro) + L-proline + ATP = L-prolyl-tRNA(Pro) + AMP + diphosphate. In terms of biological role, catalyzes the attachment of proline to tRNA(Pro) in a two-step reaction: proline is first activated by ATP to form Pro-AMP and then transferred to the acceptor end of tRNA(Pro). This is Proline--tRNA ligase from Brucella melitensis biotype 2 (strain ATCC 23457).